A 479-amino-acid polypeptide reads, in one-letter code: PRAME family member 19 (479 aa).

One copy of the LRR 1 repeat lies at 15 to 38 (QSLLRDQALAISVLDELPRELFPR). An LRR 1; degenerate repeat occupies 97–124 (RWKLQVLEMRDVDENFWTIWSGARPLSC). An LRR 2; degenerate repeat occupies 179 to 203 (HLCCTKVVNYSMNILNFRNILETVY). The stretch at 204-230 (PDSIQVLEIWNMCWPCMVAEVSRYLSQ) is one LRR 3; degenerate repeat. Residues 231–265 (MKNLRKLFISDGCGYLPSFESQGQLVAEFSSVFLR) form an LRR 4; degenerate repeat. LRR repeat units follow at residues 266-291 (LEYL…IRCL), 292-323 (KSPL…SQLK), 324-342 (QLNL…PLRA), 348-375 (AATL…ALSR), and 376-400 (CSNL…LLRH).

Belongs to the PRAME family.

This is PRAME family member 19 from Homo sapiens (Human).